The chain runs to 477 residues: tRNA(Ile)-lysidine synthase (477 aa).

Residue 36-41 (SGGADS) participates in ATP binding.

This sequence belongs to the tRNA(Ile)-lysidine synthase family.

The protein localises to the cytoplasm. The enzyme catalyses cytidine(34) in tRNA(Ile2) + L-lysine + ATP = lysidine(34) in tRNA(Ile2) + AMP + diphosphate + H(+). In terms of biological role, ligates lysine onto the cytidine present at position 34 of the AUA codon-specific tRNA(Ile) that contains the anticodon CAU, in an ATP-dependent manner. Cytidine is converted to lysidine, thus changing the amino acid specificity of the tRNA from methionine to isoleucine. The sequence is that of tRNA(Ile)-lysidine synthase from Treponema pallidum (strain Nichols).